Consider the following 760-residue polypeptide: Endoplasmin homolog (760 aa).

An N-terminal signal peptide occupies residues 1-23; the sequence is MRFLLVGFVALLAVSAFIPNVYA. Residues Asn95, Asp137, Asn150, and Phe187 each contribute to the ATP site. Asn95 is a glycosylation site (N-linked (GlcNAc...) asparagine). An N-linked (GlcNAc...) asparagine glycan is attached at Asn423. Residues 727–760 are disordered; it reads SQDAQVETEQHIEEAEPEPEAAEETTIEEEHSEL. Residues 741-760 are compositionally biased toward acidic residues; that stretch reads AEPEPEAAEETTIEEEHSEL. Positions 757–760 match the Prevents secretion from ER motif; sequence HSEL.

Belongs to the heat shock protein 90 family.

The protein localises to the endoplasmic reticulum lumen. In terms of biological role, molecular chaperone that functions in the processing and transport of secreted proteins. The protein is Endoplasmin homolog of Caenorhabditis elegans.